The chain runs to 223 residues: Ribose-5-phosphate isomerase A (223 aa).

Residues 32–35 (TGST), 85–88 (DGAD), and 98–101 (KGGG) each bind substrate. The Proton acceptor role is filled by E107. Residue K125 coordinates substrate.

This sequence belongs to the ribose 5-phosphate isomerase family. Homodimer.

The catalysed reaction is aldehydo-D-ribose 5-phosphate = D-ribulose 5-phosphate. It participates in carbohydrate degradation; pentose phosphate pathway; D-ribose 5-phosphate from D-ribulose 5-phosphate (non-oxidative stage): step 1/1. In terms of biological role, catalyzes the reversible conversion of ribose-5-phosphate to ribulose 5-phosphate. The protein is Ribose-5-phosphate isomerase A of Marinomonas sp. (strain MWYL1).